The sequence spans 117 residues: Large ribosomal subunit protein bL20 (117 aa).

This sequence belongs to the bacterial ribosomal protein bL20 family.

Its function is as follows. Binds directly to 23S ribosomal RNA and is necessary for the in vitro assembly process of the 50S ribosomal subunit. It is not involved in the protein synthesizing functions of that subunit. The sequence is that of Large ribosomal subunit protein bL20 from Photobacterium profundum (strain SS9).